The following is a 179-amino-acid chain: Large ribosomal subunit protein uL5 (179 aa).

It belongs to the universal ribosomal protein uL5 family. Part of the 50S ribosomal subunit; part of the 5S rRNA/L5/L18/L25 subcomplex. Contacts the 5S rRNA and the P site tRNA. Forms a bridge to the 30S subunit in the 70S ribosome.

Its function is as follows. This is one of the proteins that bind and probably mediate the attachment of the 5S RNA into the large ribosomal subunit, where it forms part of the central protuberance. In the 70S ribosome it contacts protein S13 of the 30S subunit (bridge B1b), connecting the 2 subunits; this bridge is implicated in subunit movement. Contacts the P site tRNA; the 5S rRNA and some of its associated proteins might help stabilize positioning of ribosome-bound tRNAs. The protein is Large ribosomal subunit protein uL5 of Bacillus velezensis (strain DSM 23117 / BGSC 10A6 / LMG 26770 / FZB42) (Bacillus amyloliquefaciens subsp. plantarum).